The chain runs to 608 residues: Phosphoenolpyruvate carboxykinase [GTP] (608 aa).

Residues Arg-82 and 222 to 224 (YGG) contribute to the substrate site. The Mn(2+) site is built by Lys-231 and His-251. Ser-273 contacts substrate. 274 to 279 (ACGKTN) lines the GTP pocket. Cys-275 is an active-site residue. Asp-298 is a Mn(2+) binding site. 389–391 (NSR) serves as a coordination point for substrate. GTP is bound by residues Arg-391, Arg-422, and 517–520 (FGDN).

Belongs to the phosphoenolpyruvate carboxykinase [GTP] family. As to quaternary structure, monomer. Mn(2+) is required as a cofactor.

Its subcellular location is the cytoplasm. The catalysed reaction is oxaloacetate + GTP = phosphoenolpyruvate + GDP + CO2. It participates in carbohydrate biosynthesis; gluconeogenesis. In terms of biological role, catalyzes the conversion of oxaloacetate (OAA) to phosphoenolpyruvate (PEP), the rate-limiting step in the metabolic pathway that produces glucose from lactate and other precursors derived from the citric acid cycle. The protein is Phosphoenolpyruvate carboxykinase [GTP] of Paenarthrobacter aurescens (strain TC1).